Here is a 114-residue protein sequence, read N- to C-terminus: Iron-sulfur cluster insertion protein ErpA (114 aa).

The iron-sulfur cluster site is built by C42, C106, and C108.

Belongs to the HesB/IscA family. Homodimer. Iron-sulfur cluster is required as a cofactor.

In terms of biological role, required for insertion of 4Fe-4S clusters for at least IspG. This Shigella boydii serotype 18 (strain CDC 3083-94 / BS512) protein is Iron-sulfur cluster insertion protein ErpA.